Here is a 144-residue protein sequence, read N- to C-terminus: MYSEIQRGRADIGGLMARPEYREWNPELIKPKKLLNPVKASRSHQELHRELLMNHRRGLGVDSKPELQRVLEHRRRNQLIKKKKEELEAKRLQCPFEQELLRRQQRLNQLEKPPEKEEDHAPEFIKVRENLRRIATLTSEEREL.

Positions 67–94 (LQRVLEHRRRNQLIKKKKEELEAKRLQC) form a coiled coil. Positions 74-84 (RRRNQLIKKKK) match the Nuclear localization signal motif. The segment at 105–124 (QRLNQLEKPPEKEEDHAPEF) is disordered. Residues 112 to 124 (KPPEKEEDHAPEF) are compositionally biased toward basic and acidic residues.

It belongs to the FAM107 family. Interacts with ACTB. Interacts with COMMD1; this interaction stabilizes COMMD1 in the nucleus. Interacts with MAP1A. Interacts with PRDX1. Interacts with F-actin.

The protein resides in the nucleus. The protein localises to the cytoplasm. It localises to the cytoskeleton. Its subcellular location is the stress fiber. It is found in the cell junction. The protein resides in the focal adhesion. The protein localises to the cell projection. It localises to the ruffle membrane. Its subcellular location is the synapse. Its function is as follows. Stress-inducible actin-binding protein that plays a role in synaptic and cognitive functions by modulating actin filamentous (F-actin) dynamics. Mediates polymerization of globular actin to F-actin. Also binds to, stabilizes and bundles F-actin. Involved in synaptic function by regulating neurite outgrowth in an actin-dependent manner and for the acquisition of hippocampus-dependent cognitive function, such as learning and long-term memory. Plays a role in the actin and microtubule cytoskeleton organization; negatively regulates focal adhesion (FA) assembly promoting malignant glial cell migration in an actin-, microtubule- and MAP1A-dependent manner. Also involved in neuroblastoma G1/S phase cell cycle progression and cell proliferation inhibition by stimulating ubiquitination of NF-kappa-B subunit RELA and NF-kappa-B degradation in a COMMD1- and actin-dependent manner. May play a role in tumor development. The sequence is that of Actin-associated protein FAM107A (FAM107A) from Pan troglodytes (Chimpanzee).